Reading from the N-terminus, the 1177-residue chain is DNA-directed RNA polymerase subunit beta' (1177 aa).

Residues Cys60, Cys62, Cys75, and Cys78 each coordinate Zn(2+). The Mg(2+) site is built by Asp450, Asp452, and Asp454. Zn(2+)-binding residues include Cys795, Cys869, Cys876, and Cys879.

It belongs to the RNA polymerase beta' chain family. As to quaternary structure, the RNAP catalytic core consists of 2 alpha, 1 beta, 1 beta' and 1 omega subunit. When a sigma factor is associated with the core the holoenzyme is formed, which can initiate transcription. Mg(2+) serves as cofactor. The cofactor is Zn(2+).

It catalyses the reaction RNA(n) + a ribonucleoside 5'-triphosphate = RNA(n+1) + diphosphate. In terms of biological role, DNA-dependent RNA polymerase catalyzes the transcription of DNA into RNA using the four ribonucleoside triphosphates as substrates. This Clostridium botulinum (strain Alaska E43 / Type E3) protein is DNA-directed RNA polymerase subunit beta'.